We begin with the raw amino-acid sequence, 275 residues long: Large ribosomal subunit protein uL2 (275 aa).

The disordered stretch occupies residues 222-275 (GVAMNPVDHPMGGGEGRSSGGRHPCSPWGMPTKGYKTRKNKTTDKFIVRKRNKR).

This sequence belongs to the universal ribosomal protein uL2 family. In terms of assembly, part of the 50S ribosomal subunit. Forms a bridge to the 30S subunit in the 70S ribosome.

In terms of biological role, one of the primary rRNA binding proteins. Required for association of the 30S and 50S subunits to form the 70S ribosome, for tRNA binding and peptide bond formation. It has been suggested to have peptidyltransferase activity; this is somewhat controversial. Makes several contacts with the 16S rRNA in the 70S ribosome. The chain is Large ribosomal subunit protein uL2 from Desulfatibacillum aliphaticivorans.